The primary structure comprises 334 residues: Endoplasmic reticulum junction formation protein lunapark (334 aa).

Residues 1–40 (MGWFFQKKKEFDFGGELDRLEMKLEEAQYNIDNIQSQKKK) lie on the Cytoplasmic side of the membrane. The stretch at 12–42 (DFGGELDRLEMKLEEAQYNIDNIQSQKKKIL) forms a coiled coil. The helical transmembrane segment at 41-61 (ILFRYTVCSLAIYTIGMAVWA) threads the bilayer. At 62–78 (SRSSILFQHPLFSKLFR) the chain is on the lumenal side. Residues 79–99 (ISLYILGVFSLYMFRWAIAWF) form a helical membrane-spanning segment. A coiled-coil region spans residues 99–127 (FCEKRLSRARMNLHKLNAEKRKILDALKS). Residues 100–334 (CEKRLSRARM…SVPESLTPTK (235 aa)) lie on the Cytoplasmic side of the membrane. The C4-type; plays a role in ER morphology zinc finger occupies 201-227 (CSHCFHHNGLASYGEKASDVRYVCLFC). The tract at residues 237-315 (KSLPSSEMDS…SSPDASYNSV (79 aa)) is disordered. Residues 239–252 (LPSSEMDSNLQTNP) show a composition bias toward polar residues. Low complexity predominate over residues 253–270 (SSISKGKKNNSNNTTQKG). Positions 273 to 283 (IISSPQVINAS) are enriched in polar residues. Ser284 is subject to Phosphoserine. Residues 297-315 (ALPTSPLSSSSPDASYNSV) are compositionally biased toward low complexity.

The protein belongs to the lunapark family.

It localises to the endoplasmic reticulum membrane. The protein resides in the golgi apparatus membrane. Its function is as follows. Plays a role in tubular endoplasmic reticulum network formation and maintenance. This is Endoplasmic reticulum junction formation protein lunapark (lnp1) from Schizosaccharomyces pombe (strain 972 / ATCC 24843) (Fission yeast).